We begin with the raw amino-acid sequence, 238 residues long: Ribonuclease HII (238 aa).

Residues 12–197 enclose the RNase H type-2 domain; it reads GIVAGVDEAG…VLELLTDDLL (186 aa). A divalent metal cation-binding residues include Asp18, Glu19, and Asp107.

This sequence belongs to the RNase HII family. Requires Mn(2+) as cofactor. Mg(2+) is required as a cofactor.

The protein localises to the cytoplasm. The catalysed reaction is Endonucleolytic cleavage to 5'-phosphomonoester.. In terms of biological role, endonuclease that specifically degrades the RNA of RNA-DNA hybrids. In Thermotoga petrophila (strain ATCC BAA-488 / DSM 13995 / JCM 10881 / RKU-1), this protein is Ribonuclease HII.